Here is a 251-residue protein sequence, read N- to C-terminus: Histocompatibility antigen 60b (251 aa).

Positions 1 to 24 (MAKSSLSLNWSLLVLLNFLGATLS) are cleaved as a signal peptide. The Extracellular portion of the chain corresponds to 25–212 (TGTDSLSCEL…NSDTQGLSFT (188 aa)). 4 N-linked (GlcNAc...) asparagine glycosylation sites follow: N63, N93, N126, and N189. Residues 213 to 233 (WIVIICIGGIVSFMAFMVFAW) form a helical membrane-spanning segment. The Cytoplasmic portion of the chain corresponds to 234-251 (CMLKKKKGALCCSSSSTT).

This sequence belongs to the NKG2D ligand family. In strain C57BL/6J, strongly expressed in cardiac muscle and skeletal muscle, with lower expression levels in spleen, liver, kidney and thymus. In strain BALB/cJ, weakly expressed in cardiac muscle, spleen, kidney and thymus.

The protein resides in the cell membrane. Its function is as follows. Ligand for the KLRK1 immunosurveillance receptor. Binding to KLRK1 stimulates cell lysis in vitro. The chain is Histocompatibility antigen 60b from Mus musculus (Mouse).